The following is a 385-amino-acid chain: Chaperone protein DnaJ (385 aa).

The J domain occupies 5–70 (DYYEVLGVSK…DKKAAYDRFG (66 aa)). The CR-type zinc-finger motif lies at 143 to 221 (GLSKQITVPS…CGGAGRQEKD (79 aa)). Zn(2+)-binding residues include Cys156, Cys159, Cys173, Cys176, Cys195, Cys198, Cys209, and Cys212. CXXCXGXG motif repeat units lie at residues 156-163 (CSSCDGTG), 173-180 (CPTCSGMG), 195-202 (CPTCNGMG), and 209-216 (CRTCGGAG). The tract at residues 299 to 323 (GGRSRVRVPEGSQSGRQMRLRGKGM) is disordered.

It belongs to the DnaJ family. Homodimer. It depends on Zn(2+) as a cofactor.

It is found in the cytoplasm. Functionally, participates actively in the response to hyperosmotic and heat shock by preventing the aggregation of stress-denatured proteins and by disaggregating proteins, also in an autonomous, DnaK-independent fashion. Unfolded proteins bind initially to DnaJ; upon interaction with the DnaJ-bound protein, DnaK hydrolyzes its bound ATP, resulting in the formation of a stable complex. GrpE releases ADP from DnaK; ATP binding to DnaK triggers the release of the substrate protein, thus completing the reaction cycle. Several rounds of ATP-dependent interactions between DnaJ, DnaK and GrpE are required for fully efficient folding. Also involved, together with DnaK and GrpE, in the DNA replication of plasmids through activation of initiation proteins. In Jannaschia sp. (strain CCS1), this protein is Chaperone protein DnaJ.